Here is an 82-residue protein sequence, read N- to C-terminus: Acyl carrier protein (82 aa).

One can recognise a Carrier domain in the interval 4 to 79 (PEMEARLKQI…DALNYIEQKL (76 aa)). O-(pantetheine 4'-phosphoryl)serine is present on Ser39.

The protein belongs to the acyl carrier protein (ACP) family. In terms of processing, 4'-phosphopantetheine is transferred from CoA to a specific serine of apo-ACP by AcpS. This modification is essential for activity because fatty acids are bound in thioester linkage to the sulfhydryl of the prosthetic group.

It is found in the cytoplasm. It participates in lipid metabolism; fatty acid biosynthesis. Functionally, carrier of the growing fatty acid chain in fatty acid biosynthesis. The polypeptide is Acyl carrier protein (Roseiflexus castenholzii (strain DSM 13941 / HLO8)).